A 153-amino-acid polypeptide reads, in one-letter code: Superoxide dismutase [Cu-Zn] (153 aa).

The Cu cation site is built by His-46, His-48, and His-63. Residues Cys-57 and Cys-146 are joined by a disulfide bond. Residues His-63, His-71, His-80, and Asp-83 each contribute to the Zn(2+) site. His-120 serves as a coordination point for Cu cation.

Belongs to the Cu-Zn superoxide dismutase family. In terms of assembly, homodimer. It depends on Cu cation as a cofactor. Zn(2+) is required as a cofactor.

It localises to the cytoplasm. It carries out the reaction 2 superoxide + 2 H(+) = H2O2 + O2. Its function is as follows. Destroys radicals which are normally produced within the cells and which are toxic to biological systems. The sequence is that of Superoxide dismutase [Cu-Zn] (SODCC) from Solidago canadensis var. scabra (Tall goldenrod).